Here is a 157-residue protein sequence, read N- to C-terminus: Protein-export protein SecB (157 aa).

This sequence belongs to the SecB family. As to quaternary structure, homotetramer, a dimer of dimers. One homotetramer interacts with 1 SecA dimer.

The protein resides in the cytoplasm. One of the proteins required for the normal export of preproteins out of the cell cytoplasm. It is a molecular chaperone that binds to a subset of precursor proteins, maintaining them in a translocation-competent state. It also specifically binds to its receptor SecA. The protein is Protein-export protein SecB of Tolumonas auensis (strain DSM 9187 / NBRC 110442 / TA 4).